We begin with the raw amino-acid sequence, 159 residues long: MIANQTIVDIVTQVVTPAIQAPFELVDVEYEKMGGDYVLSILIDKPGGITVEDTAQLTDVVSPLLDTIQPDPFPEQYMLEVSSPGLERPLKTAEALSNAVGSYINVSLYKSIDKVKIFEGDLLSFDGETLTIDYMDKTRHKTVDIPYQTVAKARLAVKL.

This sequence belongs to the RimP family.

It is found in the cytoplasm. Required for maturation of 30S ribosomal subunits. The protein is Ribosome maturation factor RimP of Streptococcus agalactiae serotype III (strain NEM316).